A 99-amino-acid chain; its full sequence is Protein SPIRAL1-like 5 (99 aa).

The segment covering 1–12 (MSRGGSFGGGQS) has biased composition (gly residues). The disordered stretch occupies residues 1–99 (MSRGGSFGGG…SSLGYLFGDK (99 aa)). Over residues 27-39 (TPAPPVAPKPAPP) the composition is skewed to pro residues. Over residues 56-73 (KISNNNYQRVQGQNSGNF) the composition is skewed to polar residues. A Phosphoserine modification is found at Ser58.

Belongs to the SPIRAL1 family. In terms of tissue distribution, expressed exclusively in stems and flowers.

In terms of biological role, acts redundantly with SPR1 in maintaining the cortical microtubules organization essential for anisotropic cell growth. This Arabidopsis thaliana (Mouse-ear cress) protein is Protein SPIRAL1-like 5 (SP1L5).